The chain runs to 216 residues: Guanylate kinase (216 aa).

The region spanning 11–189 (GVLIVISGPS…AVKKIEAILL (179 aa)) is the Guanylate kinase-like domain. 18 to 25 (GPSGAGKG) is an ATP binding site.

The protein belongs to the guanylate kinase family.

The protein localises to the cytoplasm. It catalyses the reaction GMP + ATP = GDP + ADP. In terms of biological role, essential for recycling GMP and indirectly, cGMP. The chain is Guanylate kinase (gmk) from Clostridium perfringens (strain 13 / Type A).